The following is a 51-amino-acid chain: Large ribosomal subunit protein eL39 (51 aa).

This sequence belongs to the eukaryotic ribosomal protein eL39 family.

This Thermococcus onnurineus (strain NA1) protein is Large ribosomal subunit protein eL39.